Here is a 284-residue protein sequence, read N- to C-terminus: uncharacterized protein (284 aa).

A compositionally biased stretch (polar residues) spans 1–10 (MSNSVTNFEM). Positions 1–28 (MSNSVTNFEMSSVLPGKKPCQGKNNESQ) are disordered.

This is an uncharacterized protein from Escherichia coli (strain K12).